The primary structure comprises 880 residues: Alanine--tRNA ligase (880 aa).

Positions 568, 572, 670, and 674 each coordinate Zn(2+).

This sequence belongs to the class-II aminoacyl-tRNA synthetase family. Zn(2+) serves as cofactor.

Its subcellular location is the cytoplasm. The catalysed reaction is tRNA(Ala) + L-alanine + ATP = L-alanyl-tRNA(Ala) + AMP + diphosphate. Its function is as follows. Catalyzes the attachment of alanine to tRNA(Ala) in a two-step reaction: alanine is first activated by ATP to form Ala-AMP and then transferred to the acceptor end of tRNA(Ala). Also edits incorrectly charged Ser-tRNA(Ala) and Gly-tRNA(Ala) via its editing domain. The sequence is that of Alanine--tRNA ligase from Exiguobacterium sibiricum (strain DSM 17290 / CCUG 55495 / CIP 109462 / JCM 13490 / 255-15).